The primary structure comprises 462 residues: Argininosuccinate lyase (462 aa).

Belongs to the lyase 1 family. Argininosuccinate lyase subfamily.

The protein resides in the cytoplasm. It carries out the reaction 2-(N(omega)-L-arginino)succinate = fumarate + L-arginine. The protein operates within amino-acid biosynthesis; L-arginine biosynthesis; L-arginine from L-ornithine and carbamoyl phosphate: step 3/3. This chain is Argininosuccinate lyase, found in Streptococcus agalactiae serotype Ia (strain ATCC 27591 / A909 / CDC SS700).